Here is a 327-residue protein sequence, read N- to C-terminus: Phenylalanine--tRNA ligase alpha subunit (327 aa).

Mg(2+) is bound at residue Glu-252.

It belongs to the class-II aminoacyl-tRNA synthetase family. Phe-tRNA synthetase alpha subunit type 1 subfamily. Tetramer of two alpha and two beta subunits. Requires Mg(2+) as cofactor.

The protein resides in the cytoplasm. The catalysed reaction is tRNA(Phe) + L-phenylalanine + ATP = L-phenylalanyl-tRNA(Phe) + AMP + diphosphate + H(+). The polypeptide is Phenylalanine--tRNA ligase alpha subunit (Yersinia pestis bv. Antiqua (strain Angola)).